A 150-amino-acid chain; its full sequence is Small ribosomal subunit protein uS11x (150 aa).

It belongs to the universal ribosomal protein uS11 family.

The protein resides in the cytoplasm. In Arabidopsis thaliana (Mouse-ear cress), this protein is Small ribosomal subunit protein uS11x (RPS14C).